Reading from the N-terminus, the 23-residue chain is Brevinin-1SE (23 aa).

Cysteines 17 and 23 form a disulfide.

As to expression, expressed by the skin glands.

Its subcellular location is the secreted. Its function is as follows. Mast cell degranulating peptide. Causes histamine release from rat peritoneal mast cells in vitro. Has antibacterial activity against the Gram-negative bacterium E.coli K12 and Gram-positive bacterium M.luteus NCT C2665. In Lithobates sevosus (Dusky gopher frog), this protein is Brevinin-1SE.